The sequence spans 94 residues: Protein RnfH (94 aa).

This sequence belongs to the UPF0125 (RnfH) family.

This chain is Protein RnfH, found in Yersinia pestis bv. Antiqua (strain Antiqua).